A 272-amino-acid polypeptide reads, in one-letter code: Expansin-B16 (272 aa).

A signal peptide spans 1–25 (MAAFSSSSSAPMLIRSVLFVSLLSA). One can recognise an Expansin-like EG45 domain in the interval 63–173 (GGACGYGTLV…RRTACKYGGK (111 aa)). 3 disulfide bridges follow: cysteine 66–cysteine 95, cysteine 98–cysteine 168, and cysteine 103–cysteine 109. The Expansin-like CBD domain maps to 186–267 (FWLSLLVEFE…NWTPKATYTS (82 aa)).

It belongs to the expansin family. Expansin B subfamily.

Its subcellular location is the secreted. The protein resides in the cell wall. The protein localises to the membrane. In terms of biological role, may cause loosening and extension of plant cell walls by disrupting non-covalent bonding between cellulose microfibrils and matrix glucans. No enzymatic activity has been found. May be required for rapid internodal elongation in deepwater rice during submergence. This is Expansin-B16 (EXPB16) from Oryza sativa subsp. japonica (Rice).